The primary structure comprises 620 residues: MIQKEMEIYNLFTFQIDLDKKLLFEKSNDQKNYSKIRTHYFKHKFKNKSAVFLNKNLIKNSLNKVLLNFSDFVSGAGIDTVFNQIIDEDPEVLNYLKQVKKDLSKENNATSQLTFNVTINPKNTLANFFEGFNIYLHFNEENNTVIGSFSLQWHIKKTDLFSETKNIAINNLIHTFCKNNMHEISFMQIINCFSKTKINKHGEIVLKSCAFKQKWQNVVAEKYPFSTASKDLEKINDFFDALFVMLLLVCHLNKNLLWLCEKTDFFEWKPSQKTALFKANDSGAYLARMLLFLNDWYNENQAITTADIENVNEVEDIGKLVEKYSTNQPQKLSLNSTVYVLQTKQKQFFLKNDFFFNNNEAKLFFLITMKPNVFGLDDTAIANNLNLKKISDFFKEIDFNDEDILNDFKQEQEKLLVRRTFNQLLFMNKNTEILSVVNDKQKSVIHNIVWTITYSKAIMLKAFDYSKAFEKNRTSDPSLLRSNLTVINRLRYLSEYFQNASLKYDLLYTKAKQYMQIDKFINDMIRKVNHEDEIFGKFKERIYLSLGIISAVVFGIVEFFNCVWTILTVSQEVVDKSVLDPRNIIFISIGTILVLFLLVTILVFMTRRLYLFEINKKHKN.

The next 4 helical transmembrane spans lie at Leu-66–Ile-86, Phe-238–Trp-258, Leu-546–Ile-566, and Ile-584–Phe-604.

It localises to the cell membrane. This is an uncharacterized protein from Mycoplasma genitalium (strain ATCC 33530 / DSM 19775 / NCTC 10195 / G37) (Mycoplasmoides genitalium).